Consider the following 81-residue polypeptide: uncharacterized protein (81 aa).

A run of 2 helical transmembrane segments spans residues 10-30 (FFVLLFIFTILFLIVVAFLLL) and 56-76 (VLYLFAFGILAVLFLLIAFAI).

The protein localises to the host membrane. This is an uncharacterized protein from Acidianus two-tailed virus (ATV).